The chain runs to 1360 residues: DNA-directed RNA polymerase subunit beta (1360 aa).

Belongs to the RNA polymerase beta chain family. In terms of assembly, the RNAP catalytic core consists of 2 alpha, 1 beta, 1 beta' and 1 omega subunit. When a sigma factor is associated with the core the holoenzyme is formed, which can initiate transcription.

It carries out the reaction RNA(n) + a ribonucleoside 5'-triphosphate = RNA(n+1) + diphosphate. In terms of biological role, DNA-dependent RNA polymerase catalyzes the transcription of DNA into RNA using the four ribonucleoside triphosphates as substrates. The polypeptide is DNA-directed RNA polymerase subunit beta (Desulfotalea psychrophila (strain LSv54 / DSM 12343)).